We begin with the raw amino-acid sequence, 618 residues long: Tyrosine-protein kinase ZAP-70 (618 aa).

The SH2 1 domain maps to 10–102; the sequence is FFYGSISRAE…GLPCNLRKPC (93 aa). Residues 103–162 form an interdomain A region; that stretch reads NRPPGLEPQPGVFDCLRDAMVRDYVRQTWKLEGDALEQAIISQAPQVEKLIATTAHERMP. One can recognise an SH2 2 domain in the interval 163–254; the sequence is WYHSSLTREE…GLIYRLKEVC (92 aa). Tyrosine 248 carries the phosphotyrosine modification. The tract at residues 255-336 is interdomain B; sequence PNSSASAAVA…KKLFLKRENL (82 aa). Positions 270-320 are disordered; that stretch reads AHPSTFTQPQRRVDTLNSDGYTPEPARLASSTDKPRPMPMDTSVYESPYSD. Over residues 273–289 the composition is skewed to polar residues; the sequence is STFTQPQRRVDTLNSDG. Serine 287 carries the post-translational modification Phosphoserine. Phosphotyrosine is present on tyrosine 290. Phosphotyrosine; by LCK is present on tyrosine 314. Residue tyrosine 318 is modified to Phosphotyrosine. The Protein kinase domain maps to 337–597; sequence LVADIELGCG…VEQRMRNYYY (261 aa). ATP-binding positions include 343–351 and lysine 368; that span reads LGCGNFGSV. The active-site Proton acceptor is aspartate 460. Phosphotyrosine occurs at positions 491 and 492. A Glycyl lysine isopeptide (Lys-Gly) (interchain with G-Cter in ubiquitin) cross-link involves residue lysine 543.

This sequence belongs to the protein kinase superfamily. Tyr protein kinase family. SYK/ZAP-70 subfamily. As to quaternary structure, interacts with CD247/CD3Z; this interaction docks ZAP70 at the stimulated TCR. Interacts with NFAM1. Interacts with adapter protein SLA; this interaction negatively regulates T-cell receptor signaling. Interacts with VAV1. Interacts with CBL; this interaction promotes ubiquitination, internalization and subsequent degradation of CD247/CD3Z. Identified in a complex with CBL and UBE2L3. Interacts with SHB. Interacts with adapter protein SLA2; this interaction negatively regulates T-cell receptor signaling. Interacts with CBLB. Interacts (via SH2 domains) with RHOH; this interaction regulates ZAP70 subcellular localization. Interacts with DEF6. Interacts (ubiquitinated form) with OTUD7B and UBASH3B. In terms of processing, phosphorylated on tyrosine residues upon T-cell antigen receptor (TCR) stimulation. Phosphorylation of Tyr-314 and Tyr-314 are essential for ZAP70 positive function on T-lymphocyte activation whereas Tyr-290 has a negative regulatory role. Within the C-terminal kinase domain, Tyr-491 and Tyr-492 are phosphorylated after TCR induction, Tyr-491 playing a negative regulatory role and Tyr-492 a positive. Tyr-492 is dephosphorylated by PTN22. Post-translationally, ubiquitinated in response to T cell activation. Deubiquitinated by OTUD7B. Isoform 1 and isoform 2 are expressed in thymus, spleen and lymph nodes.

Its subcellular location is the cytoplasm. The protein resides in the cell membrane. It carries out the reaction L-tyrosyl-[protein] + ATP = O-phospho-L-tyrosyl-[protein] + ADP + H(+). Activated by phosphorylation at Tyr-492 in the activation loop. In terms of biological role, tyrosine kinase that plays an essential role in regulation of the adaptive immune response. Regulates motility, adhesion and cytokine expression of mature T-cells, as well as thymocyte development. Also contributes to the development and activation of primary B-lymphocytes. When antigen presenting cells (APC) activate T-cell receptor (TCR), a serie of phosphorylations lead to the recruitment of ZAP70 to the doubly phosphorylated TCR component CD3Z through ITAM motif at the plasma membrane. This recruitment serves to localization to the stimulated TCR and to relieve its autoinhibited conformation. Release of ZAP70 active conformation is further stabilized by phosphorylation mediated by LCK. Subsequently, ZAP70 phosphorylates at least 2 essential adapter proteins: LAT and LCP2. In turn, a large number of signaling molecules are recruited and ultimately lead to lymphokine production, T-cell proliferation and differentiation. Furthermore, ZAP70 controls cytoskeleton modifications, adhesion and mobility of T-lymphocytes, thus ensuring correct delivery of effectors to the APC. ZAP70 is also required for TCR-CD3Z internalization and degradation through interaction with the E3 ubiquitin-protein ligase CBL and adapter proteins SLA and SLA2. Thus, ZAP70 regulates both T-cell activation switch on and switch off by modulating TCR expression at the T-cell surface. During thymocyte development, ZAP70 promotes survival and cell-cycle progression of developing thymocytes before positive selection (when cells are still CD4/CD8 double negative). Additionally, ZAP70-dependent signaling pathway may also contribute to primary B-cells formation and activation through B-cell receptor (BCR). This chain is Tyrosine-protein kinase ZAP-70 (Zap70), found in Mus musculus (Mouse).